The sequence spans 372 residues: MLDLSLIMLGAGNSTRFGLQSKKQWLRTGDDPLWLYATKNISSNYLFKDVIVVSNECEYMRKFSSHFKFIKGGETRQDSLRNAISNINSEFVMVSDIARADIPKELITKLIESAHNADCIVPALKISDSVIYQNEYINRDELKLIQTPQLSRTNMLKKALKTDNIFTDDSSAIKAIGGTVWYIEGDERAKKLTYKDDLKRLNLNSPSNDIFCGNGFDVHAFKEGDFITLCGVKIPYSKAFIAHSDGDVALHALCDALLGAASAPDIGELYPDNDSKFKDIDSKILLQNSVNLIRSIGFDIINADITIIAQSPKISPYKDAMAKIVADILGIPLHKVNIKATTTEHLGFIGRNEGIAANAIVNLKYFNWRNVL.

Positions 1 to 210 (MLDLSLIMLG…LNLNSPSNDI (210 aa)) are 2-C-methyl-D-erythritol 4-phosphate cytidylyltransferase. Residues 211-372 (FCGNGFDVHA…LKYFNWRNVL (162 aa)) form a 2-C-methyl-D-erythritol 2,4-cyclodiphosphate synthase region. A divalent metal cation is bound by residues D217 and H219. Residues 217–219 (DVH) and 243–244 (HS) contribute to the 4-CDP-2-C-methyl-D-erythritol 2-phosphate site. Residue H251 participates in a divalent metal cation binding. 4-CDP-2-C-methyl-D-erythritol 2-phosphate-binding positions include 265-267 (DIG), 270-274 (YPDND), 341-344 (TTTE), F348, and R351.

In the N-terminal section; belongs to the IspD/TarI cytidylyltransferase family. IspD subfamily. This sequence in the C-terminal section; belongs to the IspF family. The cofactor is a divalent metal cation.

It carries out the reaction 2-C-methyl-D-erythritol 4-phosphate + CTP + H(+) = 4-CDP-2-C-methyl-D-erythritol + diphosphate. The catalysed reaction is 4-CDP-2-C-methyl-D-erythritol 2-phosphate = 2-C-methyl-D-erythritol 2,4-cyclic diphosphate + CMP. It participates in isoprenoid biosynthesis; isopentenyl diphosphate biosynthesis via DXP pathway; isopentenyl diphosphate from 1-deoxy-D-xylulose 5-phosphate: step 2/6. The protein operates within isoprenoid biosynthesis; isopentenyl diphosphate biosynthesis via DXP pathway; isopentenyl diphosphate from 1-deoxy-D-xylulose 5-phosphate: step 4/6. In terms of biological role, bifunctional enzyme that catalyzes the formation of 4-diphosphocytidyl-2-C-methyl-D-erythritol from CTP and 2-C-methyl-D-erythritol 4-phosphate (MEP) (IspD), and catalyzes the conversion of 4-diphosphocytidyl-2-C-methyl-D-erythritol 2-phosphate (CDP-ME2P) to 2-C-methyl-D-erythritol 2,4-cyclodiphosphate (ME-CPP) with a corresponding release of cytidine 5-monophosphate (CMP) (IspF). This is Bifunctional enzyme IspD/IspF from Campylobacter fetus subsp. fetus (strain 82-40).